The chain runs to 505 residues: Amidophosphoribosyltransferase (505 aa).

The active-site Nucleophile is the Cys-2. The Glutamine amidotransferase type-2 domain occupies 2 to 236 (CGIVGIAGVM…PGEAIYITEE (235 aa)). Mg(2+) is bound by residues Thr-305, Asp-367, and Asp-368.

It in the C-terminal section; belongs to the purine/pyrimidine phosphoribosyltransferase family. Homotetramer. Mg(2+) is required as a cofactor.

It carries out the reaction 5-phospho-beta-D-ribosylamine + L-glutamate + diphosphate = 5-phospho-alpha-D-ribose 1-diphosphate + L-glutamine + H2O. It functions in the pathway purine metabolism; IMP biosynthesis via de novo pathway; N(1)-(5-phospho-D-ribosyl)glycinamide from 5-phospho-alpha-D-ribose 1-diphosphate: step 1/2. With respect to regulation, inhibited by iodoacetamide and by the glutamine analogs chloroketone and DON. Catalyzes the formation of phosphoribosylamine from phosphoribosylpyrophosphate (PRPP) and glutamine. Can also use NH(3) in place of glutamine. The polypeptide is Amidophosphoribosyltransferase (Escherichia coli (strain K12)).